A 98-amino-acid polypeptide reads, in one-letter code: MPSISTNIILAFTTALLGTLIYRSHLMSSLLCLEGMMLSMFILTSLTTLNLHFSLTTMAPIILLVFAACEAAIGLALLVMVSNTYGMDYIQNLNLLQC.

The next 3 helical transmembrane spans lie at 1 to 21 (MPSISTNIILAFTTALLGTLI), 26 to 46 (LMSSLLCLEGMMLSMFILTSL), and 61 to 81 (IILLVFAACEAAIGLALLVMV).

The protein belongs to the complex I subunit 4L family. In terms of assembly, core subunit of respiratory chain NADH dehydrogenase (Complex I) which is composed of 45 different subunits.

It localises to the mitochondrion inner membrane. It carries out the reaction a ubiquinone + NADH + 5 H(+)(in) = a ubiquinol + NAD(+) + 4 H(+)(out). Core subunit of the mitochondrial membrane respiratory chain NADH dehydrogenase (Complex I) which catalyzes electron transfer from NADH through the respiratory chain, using ubiquinone as an electron acceptor. Part of the enzyme membrane arm which is embedded in the lipid bilayer and involved in proton translocation. In Otolemur crassicaudatus (Brown greater galago), this protein is NADH-ubiquinone oxidoreductase chain 4L (MT-ND4L).